The chain runs to 236 residues: Small ribosomal subunit protein uS2c (236 aa).

The protein belongs to the universal ribosomal protein uS2 family.

The protein localises to the plastid. The protein resides in the chloroplast. This Liriodendron tulipifera (Tuliptree) protein is Small ribosomal subunit protein uS2c (rps2).